Reading from the N-terminus, the 248-residue chain is Pyridoxine 5'-phosphate synthase (248 aa).

Asn-10 provides a ligand contact to 3-amino-2-oxopropyl phosphate. 12–13 is a 1-deoxy-D-xylulose 5-phosphate binding site; the sequence is DH. 3-amino-2-oxopropyl phosphate is bound at residue Arg-21. Residue His-46 is the Proton acceptor of the active site. 1-deoxy-D-xylulose 5-phosphate is bound by residues Arg-48 and His-53. Residue Glu-73 is the Proton acceptor of the active site. Residue Thr-103 participates in 1-deoxy-D-xylulose 5-phosphate binding. Catalysis depends on His-194, which acts as the Proton donor. 3-amino-2-oxopropyl phosphate is bound by residues Gly-195 and 216 to 217; that span reads GH.

This sequence belongs to the PNP synthase family. In terms of assembly, homooctamer; tetramer of dimers.

The protein localises to the cytoplasm. The catalysed reaction is 3-amino-2-oxopropyl phosphate + 1-deoxy-D-xylulose 5-phosphate = pyridoxine 5'-phosphate + phosphate + 2 H2O + H(+). It functions in the pathway cofactor biosynthesis; pyridoxine 5'-phosphate biosynthesis; pyridoxine 5'-phosphate from D-erythrose 4-phosphate: step 5/5. Its function is as follows. Catalyzes the complicated ring closure reaction between the two acyclic compounds 1-deoxy-D-xylulose-5-phosphate (DXP) and 3-amino-2-oxopropyl phosphate (1-amino-acetone-3-phosphate or AAP) to form pyridoxine 5'-phosphate (PNP) and inorganic phosphate. This Legionella pneumophila (strain Lens) protein is Pyridoxine 5'-phosphate synthase.